The primary structure comprises 100 residues: Nucleoid-associated protein jhp_0031 (100 aa).

It belongs to the YbaB/EbfC family. Homodimer.

It localises to the cytoplasm. The protein resides in the nucleoid. In terms of biological role, binds to DNA and alters its conformation. May be involved in regulation of gene expression, nucleoid organization and DNA protection. This Helicobacter pylori (strain J99 / ATCC 700824) (Campylobacter pylori J99) protein is Nucleoid-associated protein jhp_0031.